A 594-amino-acid chain; its full sequence is DNA mismatch repair protein MutL (594 aa).

It belongs to the DNA mismatch repair MutL/HexB family.

This protein is involved in the repair of mismatches in DNA. It is required for dam-dependent methyl-directed DNA mismatch repair. May act as a 'molecular matchmaker', a protein that promotes the formation of a stable complex between two or more DNA-binding proteins in an ATP-dependent manner without itself being part of a final effector complex. The protein is DNA mismatch repair protein MutL of Tolumonas auensis (strain DSM 9187 / NBRC 110442 / TA 4).